A 640-amino-acid polypeptide reads, in one-letter code: Probable threonine--tRNA ligase, cytoplasmic (640 aa).

The region spanning 1–63 (MYEVKLKVEL…LKDCKLELMT (63 aa)) is the TGS domain.

Belongs to the class-II aminoacyl-tRNA synthetase family.

It localises to the cytoplasm. The enzyme catalyses tRNA(Thr) + L-threonine + ATP = L-threonyl-tRNA(Thr) + AMP + diphosphate + H(+). This Encephalitozoon cuniculi (strain GB-M1) (Microsporidian parasite) protein is Probable threonine--tRNA ligase, cytoplasmic.